A 222-amino-acid chain; its full sequence is Thiamine-phosphate synthase (222 aa).

4-amino-2-methyl-5-(diphosphooxymethyl)pyrimidine is bound by residues Gln44–Lys48 and Asn75. Mg(2+) is bound by residues Asp76 and Asp95. Thr114 is a binding site for 4-amino-2-methyl-5-(diphosphooxymethyl)pyrimidine. Residue Ser140–Ser142 participates in 2-[(2R,5Z)-2-carboxy-4-methylthiazol-5(2H)-ylidene]ethyl phosphate binding. A 4-amino-2-methyl-5-(diphosphooxymethyl)pyrimidine-binding site is contributed by Lys143. Gly171 provides a ligand contact to 2-[(2R,5Z)-2-carboxy-4-methylthiazol-5(2H)-ylidene]ethyl phosphate.

The protein belongs to the thiamine-phosphate synthase family. Mg(2+) is required as a cofactor.

It carries out the reaction 2-[(2R,5Z)-2-carboxy-4-methylthiazol-5(2H)-ylidene]ethyl phosphate + 4-amino-2-methyl-5-(diphosphooxymethyl)pyrimidine + 2 H(+) = thiamine phosphate + CO2 + diphosphate. The catalysed reaction is 2-(2-carboxy-4-methylthiazol-5-yl)ethyl phosphate + 4-amino-2-methyl-5-(diphosphooxymethyl)pyrimidine + 2 H(+) = thiamine phosphate + CO2 + diphosphate. It catalyses the reaction 4-methyl-5-(2-phosphooxyethyl)-thiazole + 4-amino-2-methyl-5-(diphosphooxymethyl)pyrimidine + H(+) = thiamine phosphate + diphosphate. It functions in the pathway cofactor biosynthesis; thiamine diphosphate biosynthesis; thiamine phosphate from 4-amino-2-methyl-5-diphosphomethylpyrimidine and 4-methyl-5-(2-phosphoethyl)-thiazole: step 1/1. In terms of biological role, condenses 4-methyl-5-(beta-hydroxyethyl)thiazole monophosphate (THZ-P) and 2-methyl-4-amino-5-hydroxymethyl pyrimidine pyrophosphate (HMP-PP) to form thiamine monophosphate (TMP). The chain is Thiamine-phosphate synthase from Anaeromyxobacter dehalogenans (strain 2CP-C).